The primary structure comprises 679 residues: Glycine--tRNA ligase beta subunit (679 aa).

This sequence belongs to the class-II aminoacyl-tRNA synthetase family. In terms of assembly, tetramer of two alpha and two beta subunits.

Its subcellular location is the cytoplasm. The catalysed reaction is tRNA(Gly) + glycine + ATP = glycyl-tRNA(Gly) + AMP + diphosphate. This is Glycine--tRNA ligase beta subunit from Streptococcus pyogenes serotype M1.